We begin with the raw amino-acid sequence, 216 residues long: Ras-related protein Rab-5C (216 aa).

Residues Ser-30, Ala-31, Gly-33, Lys-34, Ser-35, Ser-36, His-47, Glu-48, Thr-53, and Gly-79 each contribute to the GTP site. Ser-35 is a Mg(2+) binding site. 2 short sequence motifs (switch) span residues Gln-45–Ala-57 and Ala-78–Ala-94. Position 53 (Thr-53) interacts with Mg(2+). The residue at position 85 (Ser-85) is a Phosphoserine. 5 residues coordinate GTP: Asn-134, Lys-135, Asp-137, Ala-165, and Lys-166. The interval Asn-185–Asn-216 is disordered. Polar residues predominate over residues Gln-203–Asn-216. S-geranylgeranyl cysteine attachment occurs at residues Cys-213 and Cys-214.

It belongs to the small GTPase superfamily. Rab family. Interacts with EEA1 and INCA1. Interacts with GDI1, GDI2, CHML and CHM; phosphorylation at Ser-85 disrupts this interaction. The cofactor is Mg(2+). In terms of processing, phosphorylation of Ser-85 in the switch II region by LRRK2 prevents the association of RAB regulatory proteins, including CHM, CHML and RAB GDP dissociation inhibitors GDI1 and GDI2.

Its subcellular location is the cell membrane. It is found in the early endosome membrane. The protein localises to the melanosome. It carries out the reaction GTP + H2O = GDP + phosphate + H(+). With respect to regulation, regulated by guanine nucleotide exchange factors (GEFs) which promote the exchange of bound GDP for free GTP. Regulated by GTPase activating proteins (GAPs) which increase the GTP hydrolysis activity. Inhibited by GDP dissociation inhibitors (GDIs). Its function is as follows. The small GTPases Rab are key regulators of intracellular membrane trafficking, from the formation of transport vesicles to their fusion with membranes. Rabs cycle between an inactive GDP-bound form and an active GTP-bound form that is able to recruit to membranes different sets of downstream effectors directly responsible for vesicle formation, movement, tethering and fusion. The protein is Ras-related protein Rab-5C of Mus musculus (Mouse).